The sequence spans 495 residues: Glycerol kinase (495 aa).

Residue Thr-11 coordinates ADP. Positions 11, 12, and 13 each coordinate ATP. Thr-11 lines the sn-glycerol 3-phosphate pocket. Arg-15 contributes to the ADP binding site. Positions 81, 82, 133, and 242 each coordinate sn-glycerol 3-phosphate. Residues Arg-81, Glu-82, Tyr-133, Asp-242, and Gln-243 each contribute to the glycerol site. Residues Thr-264 and Gly-307 each coordinate ADP. ATP is bound by residues Thr-264, Gly-307, Gln-311, and Gly-409. The ADP site is built by Gly-409 and Asn-413.

Belongs to the FGGY kinase family.

The enzyme catalyses glycerol + ATP = sn-glycerol 3-phosphate + ADP + H(+). It participates in polyol metabolism; glycerol degradation via glycerol kinase pathway; sn-glycerol 3-phosphate from glycerol: step 1/1. Its activity is regulated as follows. Inhibited by fructose 1,6-bisphosphate (FBP). In terms of biological role, key enzyme in the regulation of glycerol uptake and metabolism. Catalyzes the phosphorylation of glycerol to yield sn-glycerol 3-phosphate. This is Glycerol kinase from Borrelia hermsii (strain HS1 / DAH).